The chain runs to 169 residues: Menaquinol:cytochrome c reductase iron-sulfur subunit (169 aa).

The Rieske domain occupies 62 to 160 (EPKRFDFKVK…FEVKDGKLYL (99 aa)). [2Fe-2S] cluster-binding residues include cysteine 102, histidine 104, cysteine 123, and histidine 126. Residues cysteine 107 and cysteine 125 are joined by a disulfide bond.

This sequence belongs to the Rieske iron-sulfur protein family. As to quaternary structure, the main subunits of the menaquinol:cytochrome c complex are a Rieske-type iron-sulfur protein (QcrA), a cytochrome b (QcrB) and a cytochrome c (QcrC). [2Fe-2S] cluster is required as a cofactor.

In terms of biological role, component of the menaquinol:cytochrome c reductase complex. The Rieske protein is a high potential 2Fe-2S protein. The protein is Menaquinol:cytochrome c reductase iron-sulfur subunit (qcrA) of Geobacillus thermodenitrificans.